A 321-amino-acid polypeptide reads, in one-letter code: Tetraacyldisaccharide 4'-kinase (321 aa).

54-61 provides a ligand contact to ATP; that stretch reads SVGGTGKT.

Belongs to the LpxK family.

The catalysed reaction is a lipid A disaccharide + ATP = a lipid IVA + ADP + H(+). Its pathway is glycolipid biosynthesis; lipid IV(A) biosynthesis; lipid IV(A) from (3R)-3-hydroxytetradecanoyl-[acyl-carrier-protein] and UDP-N-acetyl-alpha-D-glucosamine: step 6/6. Its function is as follows. Transfers the gamma-phosphate of ATP to the 4'-position of a tetraacyldisaccharide 1-phosphate intermediate (termed DS-1-P) to form tetraacyldisaccharide 1,4'-bis-phosphate (lipid IVA). In Rickettsia rickettsii, this protein is Tetraacyldisaccharide 4'-kinase.